Reading from the N-terminus, the 67-residue chain is ATP synthase F(0) complex subunit 8 (67 aa).

Residues 8–24 (PWFITILSMIITLFILF) form a helical membrane-spanning segment. Position 54 is an N6-acetyllysine; alternate (lysine 54). Lysine 54 is subject to N6-succinyllysine; alternate. Lysine 57 carries the N6-acetyllysine modification.

This sequence belongs to the ATPase protein 8 family. Component of the ATP synthase complex composed at least of ATP5F1A/subunit alpha, ATP5F1B/subunit beta, ATP5MC1/subunit c (homooctomer), MT-ATP6/subunit a, MT-ATP8/subunit 8, ATP5ME/subunit e, ATP5MF/subunit f, ATP5MG/subunit g, ATP5MK/subunit k, ATP5MJ/subunit j, ATP5F1C/subunit gamma, ATP5F1D/subunit delta, ATP5F1E/subunit epsilon, ATP5PF/subunit F6, ATP5PB/subunit b, ATP5PD/subunit d, ATP5PO/subunit OSCP. ATP synthase complex consists of a soluble F(1) head domain (subunits alpha(3) and beta(3)) - the catalytic core - and a membrane F(0) domain - the membrane proton channel (subunits c, a, 8, e, f, g, k and j). These two domains are linked by a central stalk (subunits gamma, delta, and epsilon) rotating inside the F1 region and a stationary peripheral stalk (subunits F6, b, d, and OSCP). Interacts with PRICKLE3.

It is found in the mitochondrion membrane. Subunit 8, of the mitochondrial membrane ATP synthase complex (F(1)F(0) ATP synthase or Complex V) that produces ATP from ADP in the presence of a proton gradient across the membrane which is generated by electron transport complexes of the respiratory chain. ATP synthase complex consist of a soluble F(1) head domain - the catalytic core - and a membrane F(1) domain - the membrane proton channel. These two domains are linked by a central stalk rotating inside the F(1) region and a stationary peripheral stalk. During catalysis, ATP synthesis in the catalytic domain of F(1) is coupled via a rotary mechanism of the central stalk subunits to proton translocation. In vivo, can only synthesize ATP although its ATP hydrolase activity can be activated artificially in vitro. Part of the complex F(0) domain. The polypeptide is ATP synthase F(0) complex subunit 8 (Orycteropus afer (Aardvark)).